The chain runs to 845 residues: Translation initiation factor IF-2 (845 aa).

Disordered stretches follow at residues 44–91 and 119–256; these read KRRK…NLSS and ARRA…NQEP. Over residues 119 to 129 the composition is skewed to basic and acidic residues; the sequence is ARRAKEREESL. The segment covering 139–148 has biased composition (acidic residues); that stretch reads DETPQEEEEP. Residues 156 to 165 show a composition bias toward polar residues; that stretch reads SLSPAQSQIE. Composition is skewed to basic and acidic residues over residues 179-194 and 202-217; these read IEKR…DRNS and SEVR…DEKR. The region spanning 343–510 is the tr-type G domain; sequence LRPPVVTIMG…AILLQAEILD (168 aa). The segment at 352–359 is G1; the sequence is GHVDHGKT. 352-359 serves as a coordination point for GTP; it reads GHVDHGKT. The interval 377–381 is G2; sequence GITQH. A G3 region spans residues 398-401; that stretch reads DTPG. Residues 398 to 402 and 452 to 455 each bind GTP; these read DTPGH and NKID. Residues 452 to 455 are G4; the sequence is NKID. Residues 488–490 are G5; sequence SAK.

It belongs to the TRAFAC class translation factor GTPase superfamily. Classic translation factor GTPase family. IF-2 subfamily.

The protein resides in the cytoplasm. Its function is as follows. One of the essential components for the initiation of protein synthesis. Protects formylmethionyl-tRNA from spontaneous hydrolysis and promotes its binding to the 30S ribosomal subunits. Also involved in the hydrolysis of GTP during the formation of the 70S ribosomal complex. The protein is Translation initiation factor IF-2 of Bartonella henselae (strain ATCC 49882 / DSM 28221 / CCUG 30454 / Houston 1) (Rochalimaea henselae).